The chain runs to 228 residues: Ribonuclease 3 (228 aa).

One can recognise an RNase III domain in the interval 5–128 (LNRLMARLGY…IIGAMLLDGG (124 aa)). Mg(2+) is bound at residue E41. The active site involves D45. Residues D114 and E117 each contribute to the Mg(2+) site. The active site involves E117. One can recognise a DRBM domain in the interval 155–225 (DAKTRLQEWL…ASLALEWLEQ (71 aa)).

Belongs to the ribonuclease III family. Homodimer. Mg(2+) serves as cofactor.

It localises to the cytoplasm. It catalyses the reaction Endonucleolytic cleavage to 5'-phosphomonoester.. Its function is as follows. Digests double-stranded RNA. Involved in the processing of primary rRNA transcript to yield the immediate precursors to the large and small rRNAs (23S and 16S). Processes some mRNAs, and tRNAs when they are encoded in the rRNA operon. Processes pre-crRNA and tracrRNA of type II CRISPR loci if present in the organism. The chain is Ribonuclease 3 from Alcanivorax borkumensis (strain ATCC 700651 / DSM 11573 / NCIMB 13689 / SK2).